Reading from the N-terminus, the 442-residue chain is MFS transporter asaE (442 aa).

Residues 1–10 (MDRSRTSSQG) show a composition bias toward polar residues. The segment at 1 to 43 (MDRSRTSSQGRDVLPPRGDEGRISPSLDKEKSPGPEDQPDAPP) is disordered. A compositionally biased stretch (basic and acidic residues) spans 17–34 (RGDEGRISPSLDKEKSPG). 12 consecutive transmembrane segments (helical) span residues 47-67 (LTAWLVVVGAWCTSFCSFGWV), 89-109 (TISWIPSLQIFFMFAMGPIVG), 119-139 (YLIIGGTFFHVFGLMMASIST), 150-170 (ICSAIGAAAIFQPALSAVSAW), 177-197 (IAFATLSTGSSVGGVIFPIMV), 206-226 (FGWSMRISAFMILFLLGIAIV), 252-272 (PVFIVTLLGYMLLTYGVFIPI), 288-307 (LASYLVPMLNGASLFGRLGA), 319-339 (IFIVMCIVAGVLVLALWIPAT), 342-362 (APIIVFATLFGFASGAYVSLS), 381-401 (LLFLFASVGGLTTSPIAGAIL), and 413-433 (IFSGVMLLGGTAFIITARIVG).

The protein belongs to the major facilitator superfamily. Monocarboxylate porter (TC 2.A.1.13) family.

The protein resides in the cell membrane. The protein operates within secondary metabolite biosynthesis. In terms of biological role, MFS transporter; part of the gene cluster that mediates the biosynthesis of aspergillic acid. Probably involved in aspergillic acid metabolism and transport. This Aspergillus flavus (strain ATCC 200026 / FGSC A1120 / IAM 13836 / NRRL 3357 / JCM 12722 / SRRC 167) protein is MFS transporter asaE.